The chain runs to 74 residues: MHNLHCLAMLIPLNISRHPFSATRLFINWSKCQLSQRMILLILIFATFQRQRDLIIPRFLLLIYSVIQCLFLHS.

The helical transmembrane segment at 54-72 threads the bilayer; that stretch reads LIIPRFLLLIYSVIQCLFL.

Its subcellular location is the membrane. This is an uncharacterized protein from Saccharomyces cerevisiae (strain ATCC 204508 / S288c) (Baker's yeast).